The primary structure comprises 610 residues: UvrABC system protein C (610 aa).

A GIY-YIG domain is found at 16–94 (NQPGVYRMYD…IKRYQPRYNV (79 aa)). Residues 204–239 (SQVIDALVARMEEASRALRFEEAARLRDQIQAVRRV) enclose the UVR domain.

This sequence belongs to the UvrC family. Interacts with UvrB in an incision complex.

It is found in the cytoplasm. The UvrABC repair system catalyzes the recognition and processing of DNA lesions. UvrC both incises the 5' and 3' sides of the lesion. The N-terminal half is responsible for the 3' incision and the C-terminal half is responsible for the 5' incision. The chain is UvrABC system protein C from Edwardsiella ictaluri (strain 93-146).